A 365-amino-acid chain; its full sequence is Putative outer membrane porin protein NmpC (365 aa).

The first 23 residues, 1-23 (MKKLTVAISAVAASVLMAMSAQA), serve as a signal peptide directing secretion.

This sequence belongs to the Gram-negative porin family. In terms of assembly, homotrimer.

It is found in the cell outer membrane. In Escherichia coli (strain K12), this protein is Putative outer membrane porin protein NmpC (nmpC).